Reading from the N-terminus, the 405-residue chain is Acetate kinase (405 aa).

N7 is a Mg(2+) binding site. Residue K14 coordinates ATP. Position 90 (R90) interacts with substrate. D147 serves as the catalytic Proton donor/acceptor. ATP contacts are provided by residues 207 to 211 (HLGNG), 282 to 284 (DMR), and 330 to 334 (GVGEN). E383 lines the Mg(2+) pocket.

This sequence belongs to the acetokinase family. Homodimer. Mg(2+) is required as a cofactor. The cofactor is Mn(2+).

It is found in the cytoplasm. It carries out the reaction acetate + ATP = acetyl phosphate + ADP. The protein operates within metabolic intermediate biosynthesis; acetyl-CoA biosynthesis; acetyl-CoA from acetate: step 1/2. Its function is as follows. Catalyzes the formation of acetyl phosphate from acetate and ATP. Can also catalyze the reverse reaction. The sequence is that of Acetate kinase from Pseudothermotoga lettingae (strain ATCC BAA-301 / DSM 14385 / NBRC 107922 / TMO) (Thermotoga lettingae).